The following is a 354-amino-acid chain: MRVTDFSFELPESLIAHYPQPERSRCRLLSLEGPTGALTHGTFTDLLDKLNPGDLLVFNNTRVIPARLFGRKASGGKIEVLVERMLDDKRILAHIRASKAPKPGTELLLGDDESIHATMTARHGALFEVEFNDPRPVLDILNAIGHMPLPPYIDRPDEDADRELYQTVYSEKPGAVAAPTAGLHFDEPLLAALREKGIEMAFVTLHVGAGTFQPVRVDTIEDHIMHSEYAEVPQEVVDAVLAAKARGNRVIAVGTTSVRSLESAAQAAKSDLIEPFFGDTQIFIYPGYQYKVIDALITNFHLPESTLIMLVSAFAGYQHTMNAYKTAVEQKYRFFSYGDAMFITYNPQAIFERP.

The protein belongs to the QueA family. Monomer.

The protein localises to the cytoplasm. It carries out the reaction 7-aminomethyl-7-carbaguanosine(34) in tRNA + S-adenosyl-L-methionine = epoxyqueuosine(34) in tRNA + adenine + L-methionine + 2 H(+). It functions in the pathway tRNA modification; tRNA-queuosine biosynthesis. Its function is as follows. Transfers and isomerizes the ribose moiety from AdoMet to the 7-aminomethyl group of 7-deazaguanine (preQ1-tRNA) to give epoxyqueuosine (oQ-tRNA). This Salmonella schwarzengrund (strain CVM19633) protein is S-adenosylmethionine:tRNA ribosyltransferase-isomerase.